The chain runs to 854 residues: Cell division control protein 24 (854 aa).

The span at 1 to 14 shows a compositional bias: polar residues; that stretch reads MAIQTRFASGTSLS. Positions 1–24 are disordered; that stretch reads MAIQTRFASGTSLSDLKPKPSATS. In terms of domain architecture, Calponin-homology (CH) spans 135 to 246; the sequence is PNMEDTLLTF…VVETLMNSSP (112 aa). One can recognise a DH domain in the interval 278 to 454; that stretch reads EYVKIIKEFV…KNIARSINEN (177 aa). A PH domain is found at 478-668; it reads RISKFGELLY…WSSCLQQLIH (191 aa). Disordered stretches follow at residues 542-571 and 674-745; these read ISAS…SNNI and QFKA…FESE. The span at 682–707 shows a compositional bias: low complexity; the sequence is STSTTSSTAKSSSMMSPTTTMNTPNH. The 94-residue stretch at 761–854 folds into the PB1 domain; it reads SILFRISYNN…NEKFLNIRLY (94 aa).

In terms of assembly, interacts with AXL2.

Its function is as follows. Promotes the exchange of CDC42-bound GDP by GTP. Controls the polarity of calmodulin, and the calcium regulatory process of bud emergence. CDC24 may be involved in the initial selection and organization of the budding site. The sequence is that of Cell division control protein 24 (CDC24) from Saccharomyces cerevisiae (strain ATCC 204508 / S288c) (Baker's yeast).